A 499-amino-acid chain; its full sequence is Glycerol kinase (499 aa).

Residue Thr-14 participates in ADP binding. Residues Thr-14, Thr-15, and Ser-16 each contribute to the ATP site. Thr-14 lines the sn-glycerol 3-phosphate pocket. Arg-18 provides a ligand contact to ADP. Sn-glycerol 3-phosphate-binding residues include Arg-84, Glu-85, Tyr-136, and Asp-245. Arg-84, Glu-85, Tyr-136, Asp-245, and Gln-246 together coordinate glycerol. ADP contacts are provided by Thr-267 and Gly-310. The ATP site is built by Thr-267, Gly-310, Gln-314, and Gly-411. Gly-411 and Asn-415 together coordinate ADP.

It belongs to the FGGY kinase family.

It carries out the reaction glycerol + ATP = sn-glycerol 3-phosphate + ADP + H(+). It participates in polyol metabolism; glycerol degradation via glycerol kinase pathway; sn-glycerol 3-phosphate from glycerol: step 1/1. With respect to regulation, inhibited by fructose 1,6-bisphosphate (FBP). Its function is as follows. Key enzyme in the regulation of glycerol uptake and metabolism. Catalyzes the phosphorylation of glycerol to yield sn-glycerol 3-phosphate. This Nitrosomonas eutropha (strain DSM 101675 / C91 / Nm57) protein is Glycerol kinase.